Reading from the N-terminus, the 84-residue chain is Acyl-CoA-binding protein (84 aa).

One can recognise an ACB domain in the interval 1-84 (MTTFEEAAQK…LYEQLATKYA (84 aa)). Residues lysine 12, 27–31 (YGLYK), lysine 53, and tyrosine 72 contribute to the an acyl-CoA site.

The protein belongs to the ACBP family. As to quaternary structure, interacts with dhkA.

Binds to acyl-CoA. Processed into the SDF-2 (spore differentiation factor 2) a peptide which triggers sporulation. SDF-2 appears to stimulate prestalk cells to release additional SDF-2 by acting through a signal transduction pathway that also involves dhkA, regA and PKA. Induces encapsulation of prespore cells in a dhkA-dependent manner. GABA induces the release of acbA from prespore cells and induces the exposure of tagC on the surface of prestalk cells where it can convert acbA to SDF-2. Glutamate acts as a competitive inhibitor and is also able to inhibit induction of sporulation by SDF-2. The chain is Acyl-CoA-binding protein (acbA) from Dictyostelium discoideum (Social amoeba).